Reading from the N-terminus, the 210-residue chain is Casparian strip membrane protein 1 (210 aa).

A disordered region spans residues 1 to 25 (MEKSEATTIDVAETSRESKGKAPLL). Over 1-48 (MEKSEATTIDVAETSRESKGKAPLLRDPPAWVPAAVERQRAAPAYKRG) the chain is Cytoplasmic. The chain crosses the membrane as a helical span at residues 49–69 (VAIFDLILRISAATAALAATI). Residues 70-98 (TMGTTEQTLPFFTQFFQFQASYDDLPTFT) lie on the Extracellular side of the membrane. A helical transmembrane segment spans residues 99 to 119 (FFVIAMSIVTGYLVLSVPFSI). Residues 120–138 (VCIARPVAAAPRLLLILCD) are Cytoplasmic-facing. Residues 139-159 (TLAVTLNTSAAGASAAIVYLA) form a helical membrane-spanning segment. The Extracellular segment spans residues 160–183 (HNGNSDANWLAICQQFNDFCQRTS). Residues 184–204 (GAVVASFVAVVLLIFLVVLSA) traverse the membrane as a helical segment. Over 205-210 (SALKKH) the chain is Cytoplasmic.

Belongs to the Casparian strip membrane proteins (CASP) family. Homodimer and heterodimers.

It is found in the cell membrane. In terms of biological role, regulates membrane-cell wall junctions and localized cell wall deposition. Required for establishment of the Casparian strip membrane domain (CSD) and the subsequent formation of Casparian strips, a cell wall modification of the root endodermis that determines an apoplastic barrier between the intraorganismal apoplasm and the extraorganismal apoplasm and prevents lateral diffusion. This chain is Casparian strip membrane protein 1, found in Erythranthe guttata (Yellow monkey flower).